Consider the following 1328-residue polypeptide: ABC transporter C family member 7 (1328 aa).

The region spanning 104–389 (HKTSIIVQIF…LPQAIQRLLS (286 aa)) is the ABC transmembrane type-1 1 domain. 6 helical membrane-spanning segments follow: residues 112-132 (IFSA…ILYV), 140-160 (SFLV…FLSI), 224-244 (LILL…CWTI), 245-265 (GYSG…STFL), 287-307 (ISEM…LFFI), and 333-353 (MVVQ…YTLI). The ABC transporter 1 domain maps to 457–678 (IELVNNDSIE…FDFESIMKTK (222 aa)). ATP is bound at residue 490-497 (GVVGSGKS). The segment covering 684–695 (LNNSNNNNNNNN) has biased composition (low complexity). The segment at 684–708 (LNNSNNNNNNNNNKEEEEDVENLEK) is disordered. 5 consecutive transmembrane segments (helical) span residues 762–782 (FIFF…FLLF), 802–822 (DSFY…FLGI), 894–914 (VLMM…LALF), 988–1008 (IGIK…FFSL), and 1014–1034 (GLSV…NWCI). An ABC transmembrane type-1 2 domain is found at 765-1046 (FFTMIMMYII…YIEFSMKMSS (282 aa)). One can recognise an ABC transporter 2 domain in the interval 1083–1316 (IQFKNVEIKY…INNQNSKFKK (234 aa)). 1117–1124 (GKSGSGKS) contributes to the ATP binding site.

The protein belongs to the ABC transporter superfamily. ABCC family. Conjugate transporter (TC 3.A.1.208) subfamily.

The protein localises to the membrane. The polypeptide is ABC transporter C family member 7 (abcC7) (Dictyostelium discoideum (Social amoeba)).